The sequence spans 402 residues: Multidrug resistance protein MdtG (402 aa).

A run of 11 helical transmembrane segments spans residues Leu14 to Phe34, Leu52 to Trp72, Leu90 to Ile110, Ala113 to Val133, Ala149 to Leu169, Pro171 to Val191, Val219 to Ile239, Leu254 to Pro274, Val288 to Asn308, Leu318 to Ile338, and Ala376 to Phe396.

This sequence belongs to the major facilitator superfamily. DHA1 family. MdtG (TC 2.A.1.2.20) subfamily.

The protein resides in the cell inner membrane. The protein is Multidrug resistance protein MdtG of Proteus mirabilis (strain HI4320).